The primary structure comprises 163 residues: Steroid receptor-associated and regulated protein (163 aa).

The span at 1-16 (MAFSKDPRRTSLRDSS) shows a compositional bias: basic and acidic residues. 2 disordered regions span residues 1–30 (MAFSKDPRRTSLRDSSVEMSSGTQPSCAPK) and 96–149 (ALDG…EKVK). Polar residues predominate over residues 17–26 (VEMSSGTQPS).

As to quaternary structure, interacts with 14-3-3 proteins.

Functionally, may regulate the transcriptional function of androgen and estrogen receptors. The sequence is that of Steroid receptor-associated and regulated protein from Mus musculus (Mouse).